Consider the following 245-residue polypeptide: Protein ARV 1 (245 aa).

5 helical membrane-spanning segments follow: residues 70-90 (INPA…AYLL), 117-137 (IKVL…FAIA), 163-183 (IFLL…FVDI), 200-220 (TMTR…LVGQ), and 224-244 (PTIF…FFRI).

The protein belongs to the ARV1 family. In terms of tissue distribution, restricted to tissues in which cells are actively dividing or expanding. Mostly expressed in roots and flowers, and, to a lower extent, in stems and leaves.

It is found in the endoplasmic reticulum membrane. Its function is as follows. Mediator of sterol homeostasis involved in sterol uptake, trafficking and distribution into membranes. Also regulates the sphingolipid metabolism. The protein is Protein ARV 1 of Arabidopsis thaliana (Mouse-ear cress).